We begin with the raw amino-acid sequence, 195 residues long: Meiotically up-regulated gene 84 protein (195 aa).

Topologically, residues 1-84 are cytoplasmic; sequence MTLTHHSTFI…IMVKVPTYEY (84 aa). Residues 85 to 105 form a helical membrane-spanning segment; sequence YGFVMYLVSMLGFGVYIVWAL. Residues 106 to 122 are Lumenal-facing; it reads TPAPVLKFFEIHYYLSR. Residues 123–143 form a helical membrane-spanning segment; that stretch reads WWALAIPTWLFVLVIYIHVVL. The Cytoplasmic portion of the chain corresponds to 144-195; the sequence is NAYNTEVLTKPFSSLECIVDQYALVGEEDGAAHGRVVDLRLCDVNKQQLEET.

Its subcellular location is the endoplasmic reticulum membrane. In terms of biological role, has a role in meiosis. The chain is Meiotically up-regulated gene 84 protein (mug84) from Schizosaccharomyces pombe (strain 972 / ATCC 24843) (Fission yeast).